The following is a 354-amino-acid chain: NADH-quinone oxidoreductase subunit H (354 aa).

Transmembrane regions (helical) follow at residues 25-45 (LVRI…LILW), 91-111 (WIYM…WAVI), 126-146 (LLYA…AGWA), 170-190 (MGFA…SGIV), 205-225 (FLSW…ISGI), 267-287 (IVIS…PFGF), 290-310 (FIPG…VFIW), and 330-350 (IFIP…MSPL).

This sequence belongs to the complex I subunit 1 family. As to quaternary structure, NDH-1 is composed of 14 different subunits. Subunits NuoA, H, J, K, L, M, N constitute the membrane sector of the complex.

The protein localises to the cell inner membrane. The catalysed reaction is a quinone + NADH + 5 H(+)(in) = a quinol + NAD(+) + 4 H(+)(out). NDH-1 shuttles electrons from NADH, via FMN and iron-sulfur (Fe-S) centers, to quinones in the respiratory chain. The immediate electron acceptor for the enzyme in this species is believed to be ubiquinone. Couples the redox reaction to proton translocation (for every two electrons transferred, four hydrogen ions are translocated across the cytoplasmic membrane), and thus conserves the redox energy in a proton gradient. This subunit may bind ubiquinone. The chain is NADH-quinone oxidoreductase subunit H from Paraburkholderia xenovorans (strain LB400).